Consider the following 236-residue polypeptide: Leucyl/phenylalanyl-tRNA--protein transferase (236 aa).

It belongs to the L/F-transferase family.

It localises to the cytoplasm. It catalyses the reaction N-terminal L-lysyl-[protein] + L-leucyl-tRNA(Leu) = N-terminal L-leucyl-L-lysyl-[protein] + tRNA(Leu) + H(+). The catalysed reaction is N-terminal L-arginyl-[protein] + L-leucyl-tRNA(Leu) = N-terminal L-leucyl-L-arginyl-[protein] + tRNA(Leu) + H(+). It carries out the reaction L-phenylalanyl-tRNA(Phe) + an N-terminal L-alpha-aminoacyl-[protein] = an N-terminal L-phenylalanyl-L-alpha-aminoacyl-[protein] + tRNA(Phe). In terms of biological role, functions in the N-end rule pathway of protein degradation where it conjugates Leu, Phe and, less efficiently, Met from aminoacyl-tRNAs to the N-termini of proteins containing an N-terminal arginine or lysine. The chain is Leucyl/phenylalanyl-tRNA--protein transferase from Vibrio atlanticus (strain LGP32) (Vibrio splendidus (strain Mel32)).